Consider the following 300-residue polypeptide: Uricase (300 aa).

N-acetylalanine is present on A2. 2 positions are modified to N6-acetyllysine; alternate: K6 and K19. N6-succinyllysine; alternate occurs at positions 6 and 19. The Charge relay system role is filled by K19. An N6-acetyllysine mark is found at K23 and K32. 2 positions are modified to phosphoserine: S35 and S59. T64 serves as the catalytic Charge relay system. Urate-binding residues include T64 and D65. N6-acetyllysine occurs at positions 114, 118, and 160. F166 is a urate binding site. 2 positions are modified to N6-acetyllysine: K171 and K181. R183 contacts urate. N6-acetyllysine; alternate occurs at positions 217 and 224. 2 positions are modified to N6-succinyllysine; alternate: K217 and K224. S228 is subject to Phosphoserine. Residues V231, Q232, and N258 each contribute to the urate site. H260 acts as the Charge relay system in catalysis. Position 274 is an N6-acetyllysine (K274). Position 285 is a phosphotyrosine (Y285). A Microbody targeting signal motif is present at residues 298-300 (SRL).

This sequence belongs to the uricase family.

It localises to the peroxisome. The enzyme catalyses urate + O2 + H2O = 5-hydroxyisourate + H2O2. Its pathway is purine metabolism; urate degradation; (S)-allantoin from urate: step 1/3. Catalyzes the oxidation of uric acid to 5-hydroxyisourate, which is further processed to form (S)-allantoin. The chain is Uricase (UOX) from Oryctolagus cuniculus (Rabbit).